A 117-amino-acid polypeptide reads, in one-letter code: UPF0342 protein LGAS_1451 (117 aa).

Belongs to the UPF0342 family.

The polypeptide is UPF0342 protein LGAS_1451 (Lactobacillus gasseri (strain ATCC 33323 / DSM 20243 / BCRC 14619 / CIP 102991 / JCM 1131 / KCTC 3163 / NCIMB 11718 / NCTC 13722 / AM63)).